A 450-amino-acid polypeptide reads, in one-letter code: tRNA modification GTPase MnmE (450 aa).

(6S)-5-formyl-5,6,7,8-tetrahydrofolate is bound by residues Arg23, Glu80, and Arg123. The region spanning 219-372 (GLHVVLAGKP…LRQRLLQLAG (154 aa)) is the TrmE-type G domain. Asn229 serves as a coordination point for K(+). GTP is bound by residues 229–234 (NVGKSS), 248–254 (TPIAGTT), 273–276 (DTAG), and 353–355 (SAR). Ser233 is a binding site for Mg(2+). Residues Thr248, Ile250, and Thr253 each coordinate K(+). Thr254 is a binding site for Mg(2+). A (6S)-5-formyl-5,6,7,8-tetrahydrofolate-binding site is contributed by Lys450.

This sequence belongs to the TRAFAC class TrmE-Era-EngA-EngB-Septin-like GTPase superfamily. TrmE GTPase family. As to quaternary structure, homodimer. Heterotetramer of two MnmE and two MnmG subunits. It depends on K(+) as a cofactor.

It localises to the cytoplasm. Its function is as follows. Exhibits a very high intrinsic GTPase hydrolysis rate. Involved in the addition of a carboxymethylaminomethyl (cmnm) group at the wobble position (U34) of certain tRNAs, forming tRNA-cmnm(5)s(2)U34. The chain is tRNA modification GTPase MnmE from Bordetella bronchiseptica (strain ATCC BAA-588 / NCTC 13252 / RB50) (Alcaligenes bronchisepticus).